The following is a 645-amino-acid chain: Sodium/potassium/calcium exchanger 3 (645 aa).

The N-terminal stretch at Met1–Arg43 is a signal peptide. The Extracellular portion of the chain corresponds to Glu44–Gln106. N-linked (GlcNAc...) asparagine glycans are attached at residues Asn70 and Asn85. Residues Gly107–Cys127 traverse the membrane as a helical segment. The Cytoplasmic portion of the chain corresponds to Asp128–Ala151. The stretch at Val148–Phe188 is one Alpha-1 repeat. The chain crosses the membrane as a helical span at residues Thr152–Ile172. Over Thr173–Thr181 the chain is Extracellular. A helical membrane pass occupies residues Ile182 to Gly202. The Cytoplasmic portion of the chain corresponds to Gln203–Ser209. The chain crosses the membrane as a helical span at residues Trp210–Ile230. Residues Tyr231–Lys234 are Extracellular-facing. Residues Val235–Lys255 form a helical membrane-spanning segment. Residues Tyr256–Thr486 are Cytoplasmic-facing. The residue at position 307 (Ser307) is a Phosphoserine. 2 disordered regions span residues Thr379 to Arg398 and Ala404 to Pro442. Positions Ala404–Gly435 are enriched in acidic residues. A helical transmembrane segment spans residues Leu487–Leu507. Over Gly508–Val512 the chain is Extracellular. A helical membrane pass occupies residues Ile513–Ile533. Residues Ala520–Asn551 form an Alpha-2 repeat. Residues Val534–Asn551 are Cytoplasmic-facing. The chain crosses the membrane as a helical span at residues Val552–Tyr572. Topologically, residues Gly573 to Gly582 are extracellular. Residues Leu583–Leu603 traverse the membrane as a helical segment. The Cytoplasmic portion of the chain corresponds to Asn604–Leu617. Residues Phe618–Val638 form a helical membrane-spanning segment. Residues Asn639–Asp645 lie on the Extracellular side of the membrane.

This sequence belongs to the Ca(2+):cation antiporter (CaCA) (TC 2.A.19) family. SLC24A subfamily. In terms of tissue distribution, abundant in the brain. Highest levels found in selected thalamic nuclei, hippocampal CA1 neurons and in layer IV of the cerebral cortex. Expressed in dental tissues.

Its subcellular location is the cell membrane. It carries out the reaction Ca(2+)(out) + K(+)(out) + 4 Na(+)(in) = Ca(2+)(in) + K(+)(in) + 4 Na(+)(out). Its function is as follows. Calcium, potassium:sodium antiporter that transports 1 Ca(2+) and 1 K(+) in exchange for 4 Na(+). The protein is Sodium/potassium/calcium exchanger 3 (Slc24a3) of Mus musculus (Mouse).